The following is a 495-amino-acid chain: MTARAIMIQGTGSDVGKSLLVAGFCRLAARRGLSVAPFKPQNMSNNAAATADGGEIGRAQALQARACGLDPQTDFNPVLLKPQSDCTAQVIVHGRPTATLEAADYMARRDTLRGAVLESFARLTARFDLVIVEGAGSPAEINLRDRDIANMGFARAAGVPVVLAGDIDRGGVIAALVGTKTVIDPADAAMIRAFLINKFRGDPALFEPAMADIERMTGWAGLGIVPWLSAAARLPAEDGVALEQMRPTGGGRIRIAAPMLSRIANFDDADPLRAEPSVDFFFVPPGQAIPRDVDVILLFGTKSTLGDMAFLRAQGWDHDILAHARTGGRILGICGGYQMLGQWLCDPEGVDGAAGELPGLGLLKTDTTMQGEKTVRPVTGQCARTGLPVSGYEIHAGLTRGPDAARPFLHLPEGPDGAISPDGRVEGTYVHGLFAQDAFRAAWLENVRAGASSDAAYGASVEAALDELADGLEAHLDVDRFFALAAAPGWRGAPS.

The 188-residue stretch at R252–F439 folds into the GATase cobBQ-type domain. The active-site Nucleophile is the C334. H431 is an active-site residue.

The protein belongs to the CobB/CobQ family. CobQ subfamily.

The protein operates within cofactor biosynthesis; adenosylcobalamin biosynthesis. Its function is as follows. Catalyzes amidations at positions B, D, E, and G on adenosylcobyrinic A,C-diamide. NH(2) groups are provided by glutamine, and one molecule of ATP is hydrogenolyzed for each amidation. This is Cobyric acid synthase from Hyphomonas neptunium (strain ATCC 15444).